The following is a 317-amino-acid chain: Porphobilinogen deaminase (317 aa).

Cysteine 245 carries the S-(dipyrrolylmethanemethyl)cysteine modification.

The protein belongs to the HMBS family. As to quaternary structure, monomer. It depends on dipyrromethane as a cofactor.

The catalysed reaction is 4 porphobilinogen + H2O = hydroxymethylbilane + 4 NH4(+). Its pathway is porphyrin-containing compound metabolism; protoporphyrin-IX biosynthesis; coproporphyrinogen-III from 5-aminolevulinate: step 2/4. It functions in the pathway porphyrin-containing compound metabolism; chlorophyll biosynthesis. Tetrapolymerization of the monopyrrole PBG into the hydroxymethylbilane pre-uroporphyrinogen in several discrete steps. The polypeptide is Porphobilinogen deaminase (Prochlorococcus marinus (strain MIT 9313)).